We begin with the raw amino-acid sequence, 130 residues long: Small ribosomal subunit protein uS9 (130 aa).

Belongs to the universal ribosomal protein uS9 family.

The protein is Small ribosomal subunit protein uS9 of Vibrio atlanticus (strain LGP32) (Vibrio splendidus (strain Mel32)).